Here is a 238-residue protein sequence, read N- to C-terminus: Chorionic somatomammotropin hormone 2 (238 aa).

A signal peptide spans 1–36 (MAPAPSFRGHQWTYNPVRGSCLLLLLVVSNLLLCQG). Residue His-66 participates in Zn(2+) binding. 4 N-linked (GlcNAc...) asparagine glycosylation sites follow: Asn-70, Asn-92, Asn-146, and Asn-160. Cysteines 97 and 215 form a disulfide. Asp-224 is a Zn(2+) binding site. Residues Cys-232 and Cys-238 are joined by a disulfide bond.

This sequence belongs to the somatotropin/prolactin family.

The protein resides in the secreted. This chain is Chorionic somatomammotropin hormone 2 (CSH2), found in Bos taurus (Bovine).